A 232-amino-acid polypeptide reads, in one-letter code: Ribose-5-phosphate isomerase A (232 aa).

Residues 28 to 31 (TGST), 83 to 86 (DGAD), and 96 to 99 (KGGG) each bind substrate. Glu-105 (proton acceptor) is an active-site residue. Lys-123 contacts substrate.

It belongs to the ribose 5-phosphate isomerase family. Homodimer.

It carries out the reaction aldehydo-D-ribose 5-phosphate = D-ribulose 5-phosphate. Its pathway is carbohydrate degradation; pentose phosphate pathway; D-ribose 5-phosphate from D-ribulose 5-phosphate (non-oxidative stage): step 1/1. Catalyzes the reversible conversion of ribose-5-phosphate to ribulose 5-phosphate. The sequence is that of Ribose-5-phosphate isomerase A from Rhodopseudomonas palustris (strain HaA2).